The sequence spans 130 residues: Glycine cleavage system H protein (130 aa).

The 83-residue stretch at 24–106 (TATVGITDFA…YGDGWMFKVK (83 aa)) folds into the Lipoyl-binding domain. N6-lipoyllysine is present on Lys-65.

This sequence belongs to the GcvH family. As to quaternary structure, the glycine cleavage system is composed of four proteins: P, T, L and H. (R)-lipoate is required as a cofactor.

The glycine cleavage system catalyzes the degradation of glycine. The H protein shuttles the methylamine group of glycine from the P protein to the T protein. This is Glycine cleavage system H protein from Marinobacter nauticus (strain ATCC 700491 / DSM 11845 / VT8) (Marinobacter aquaeolei).